The primary structure comprises 151 residues: SsrA-binding protein (151 aa).

Positions glycine 121 to alanine 151 are disordered. Positions aspartate 126–arginine 142 are enriched in basic and acidic residues.

This sequence belongs to the SmpB family.

Its subcellular location is the cytoplasm. Required for rescue of stalled ribosomes mediated by trans-translation. Binds to transfer-messenger RNA (tmRNA), required for stable association of tmRNA with ribosomes. tmRNA and SmpB together mimic tRNA shape, replacing the anticodon stem-loop with SmpB. tmRNA is encoded by the ssrA gene; the 2 termini fold to resemble tRNA(Ala) and it encodes a 'tag peptide', a short internal open reading frame. During trans-translation Ala-aminoacylated tmRNA acts like a tRNA, entering the A-site of stalled ribosomes, displacing the stalled mRNA. The ribosome then switches to translate the ORF on the tmRNA; the nascent peptide is terminated with the 'tag peptide' encoded by the tmRNA and targeted for degradation. The ribosome is freed to recommence translation, which seems to be the essential function of trans-translation. The protein is SsrA-binding protein of Chromobacterium violaceum (strain ATCC 12472 / DSM 30191 / JCM 1249 / CCUG 213 / NBRC 12614 / NCIMB 9131 / NCTC 9757 / MK).